The primary structure comprises 345 residues: Dihydroorotase (345 aa).

Residues H14 and H16 each contribute to the Zn(2+) site. Residues H16–R18 and N42 contribute to the substrate site. Zn(2+)-binding residues include K100, H137, and H175. The residue at position 100 (K100) is an N6-carboxylysine. Position 137 (H137) interacts with substrate. L220 provides a ligand contact to substrate. Zn(2+) is bound at residue D248. The active site involves D248. Substrate-binding residues include H252 and A264.

This sequence belongs to the metallo-dependent hydrolases superfamily. DHOase family. Class II DHOase subfamily. In terms of assembly, homodimer. Requires Zn(2+) as cofactor.

The enzyme catalyses (S)-dihydroorotate + H2O = N-carbamoyl-L-aspartate + H(+). Its pathway is pyrimidine metabolism; UMP biosynthesis via de novo pathway; (S)-dihydroorotate from bicarbonate: step 3/3. Functionally, catalyzes the reversible cyclization of carbamoyl aspartate to dihydroorotate. The chain is Dihydroorotase from Nitrosococcus oceani (strain ATCC 19707 / BCRC 17464 / JCM 30415 / NCIMB 11848 / C-107).